The chain runs to 81 residues: Teretoxin Tsu6.8 (81 aa).

Positions 1–21 are cleaved as a signal peptide; the sequence is MATSGRLLCLCLVLGLIFESL. Positions 22–45 are excised as a propeptide; sequence GHPVMGEKRAGENASPSARSLPKR.

Belongs to the teretoxin M (TM) superfamily. Contains 3 disulfide bonds. In terms of tissue distribution, expressed by the venom duct.

Its subcellular location is the secreted. This Terebra subulata (Chocolate spotted auger) protein is Teretoxin Tsu6.8.